Reading from the N-terminus, the 192-residue chain is Ion-translocating oxidoreductase complex subunit A (192 aa).

Transmembrane regions (helical) follow at residues 5–25 (LLLL…FLGL), 39–59 (IGMS…SYLV), 65–85 (LPFD…AVVV), 102–122 (ALGI…VALL), 134–154 (AIYG…FSAM), and 171–191 (AIAM…TGLV).

The protein belongs to the NqrDE/RnfAE family. In terms of assembly, the complex is composed of six subunits: RnfA, RnfB, RnfC, RnfD, RnfE and RnfG.

It localises to the cell inner membrane. Its function is as follows. Part of a membrane-bound complex that couples electron transfer with translocation of ions across the membrane. The polypeptide is Ion-translocating oxidoreductase complex subunit A (Shewanella sp. (strain ANA-3)).